Here is a 221-residue protein sequence, read N- to C-terminus: ATP phosphoribosyltransferase (221 aa).

The protein belongs to the ATP phosphoribosyltransferase family. Short subfamily. In terms of assembly, heteromultimer composed of HisG and HisZ subunits.

The protein localises to the cytoplasm. It carries out the reaction 1-(5-phospho-beta-D-ribosyl)-ATP + diphosphate = 5-phospho-alpha-D-ribose 1-diphosphate + ATP. The protein operates within amino-acid biosynthesis; L-histidine biosynthesis; L-histidine from 5-phospho-alpha-D-ribose 1-diphosphate: step 1/9. Catalyzes the condensation of ATP and 5-phosphoribose 1-diphosphate to form N'-(5'-phosphoribosyl)-ATP (PR-ATP). Has a crucial role in the pathway because the rate of histidine biosynthesis seems to be controlled primarily by regulation of HisG enzymatic activity. This chain is ATP phosphoribosyltransferase, found in Rhizorhabdus wittichii (strain DSM 6014 / CCUG 31198 / JCM 15750 / NBRC 105917 / EY 4224 / RW1) (Sphingomonas wittichii).